A 190-amino-acid polypeptide reads, in one-letter code: dCTP deaminase (190 aa).

113–118 (KSTYAR) serves as a coordination point for dCTP. Residue glutamate 139 is the Proton donor/acceptor of the active site. The dCTP site is built by glutamine 158, tyrosine 172, lysine 181, and glutamine 182.

Belongs to the dCTP deaminase family. In terms of assembly, homotrimer.

It catalyses the reaction dCTP + H2O + H(+) = dUTP + NH4(+). The protein operates within pyrimidine metabolism; dUMP biosynthesis; dUMP from dCTP (dUTP route): step 1/2. Functionally, catalyzes the deamination of dCTP to dUTP. The chain is dCTP deaminase from Chlamydia muridarum (strain MoPn / Nigg).